The following is a 1545-amino-acid chain: MLNKKFKLNFIALTVAYALTPYTEAALVRDDVDYQIFRDFAENKGKFSVGATNVEVRDKNNRPLGNVLPNGIPMIDFSVVDVDKRIATLVNPQYVVGVKHVSNGVSELHFGNLNGNMNNGNAKAHRDVSSEENRYYTVEKNEYPTKLNGKAVTTEDQAQKRREDYYMPRLDKFVTEVAPIEASTDSSTAGTYNNKDKYPYFVRLGSGTQFIYENGTRYELWLGKEGQKSDAGGYNLKLVGNAYTYGIAGTPYEVNHENDGLIGFGNSNNEYINPKEILSKKPLTNYAVLGDSGSPLFVYDREKGKWLFLGSYDYWAGYNKKSWQEWNIYKPEFAEKIYEQYSAGSLIGSKTDYSWSSNGKTSTITGGEKSLNVDLADGKDKPNHGKSVTFEGSGTLTLNNNIDQGAGGLFFEGDYEVKGTSDNTTWKGAGVSVAEGKTVTWKVHNPQYDRLAKIGKGTLIVEGTGDNKGSLKVGDGTVILKQQTNGSGQHAFASVGIVSGRSTLVLNDDKQVDPNSIYFGFRGGRLDLNGNSLTFDHIRNIDEGARLVNHSTSKHSTVTITGDNLITDPNNVSIYYVKPLEDDNPYAIRQIKYGYQLYFNEENRTYYALKKDASIRSEFPQNRGESNNSWLYMGTEKADAQKNAMNHINNERMNGFNGYFGEEEGKNNGNLNVTFKGKSEQNRFLLTGGTNLNGDLNVQQGTLFLSGRPTPHARDIAGISSTKKDSHFSENNEVVVEDDWINRNFKATNINVTNNATLYSGRNVESITSNITASNNAKVHIGYKAGDTVCVRSDYTGYVTCTTDKLSDKALNSFNPTNLRGNVNLTESANFVLGKANLFGTIQSRGNSQVRLTENSHWHLTGNSDVHQLDLANGHIHLNSADNSNNVTKYNTLTVNSLSGNGSFYYLTDLSNKQGDKVVVTKSATGNFTLQVADKTGEPNHNELTLFDASKAQRDHLNVSLVGNTVDLGAWKYKLRNVNGRYDLYNPEVEKRNQTVDTTNITTPNNIQADVPSVPSNNEEIARVDEAPVPPPAPATPSETTETVAENSKQESKTVEKNEQDATETTAQNREVAKEAKSNVKANTQTNEVAQSGSETKETQTTETKETATVEKEEKAKVETEKTQEVPKVTSQVSPKQEQSETVQPQAEPARENDPTVNIKEPQSQTNTTADTEQPAKETSSNVEQPVTESTTVNTGNSVVENPENTTPATTQPTVNSESSNKPKNRHRRSVRSVPHNVEPATTSSNDRSTVALCDLTSTNTNAVLSDARAKAQFVALNVGKAVSQHISQLEMNNEGQYNVWVSNTSMNKNYSSSQYRRFSSKSTQTQLGWDQTISNNVQLGGVFTYVRNSNNFDKATSKNTLAQVNFYSKYYADNHWYLGIDLGYGKFQSKLQTNHNAKFARHTAQFGLTAGKAFNLGNFGITPIVGVRYSYLSNADFALDQARIKVNPISVKTAFAQVDLSYTYHLGEFSVTPILSARYDANQGSGKINVNGYDFAYNVENQQQYNAGLKLKYHNVKLSLIGGLTKAKQAEKQKTAELKLSFSF.

Positions 1–25 (MLNKKFKLNFIALTVAYALTPYTEA) are cleaved as a signal peptide. A Peptidase S6 domain is found at 26-336 (ALVRDDVDYQ…NIYKPEFAEK (311 aa)). The active site involves S292. Polar residues predominate over residues 995–1019 (TVDTTNITTPNNIQADVPSVPSNNE). The segment at 995 to 1246 (TVDTTNITTP…NVEPATTSSN (252 aa)) is disordered. The span at 1036-1046 (TPSETTETVAE) shows a compositional bias: low complexity. Basic and acidic residues predominate over residues 1048–1060 (SKQESKTVEKNEQ). Residues 1080–1094 (VKANTQTNEVAQSGS) are compositionally biased toward polar residues. The segment covering 1095 to 1125 (ETKETQTTETKETATVEKEEKAKVETEKTQE) has biased composition (basic and acidic residues). Composition is skewed to polar residues over residues 1129–1145 (VTSQVSPKQEQSETVQP) and 1161–1222 (EPQS…SSNK). Residues 1293 to 1545 (NNEGQYNVWV…TAELKLSFSF (253 aa)) enclose the Autotransporter domain.

The protein localises to the periplasm. It is found in the secreted. Its subcellular location is the cell surface. It localises to the cell outer membrane. It catalyses the reaction Cleavage of immunoglobulin A molecules at certain Pro-|-Xaa bonds in the hinge region. No small molecule substrates are known.. Functionally, virulence factor; cleaves host immunoglobulin A producing intact Fc and Fab fragments. The sequence is that of Immunoglobulin A1 protease autotransporter (iga) from Haemophilus influenzae.